The chain runs to 1712 residues: Latent-transforming growth factor beta-binding protein 1 (1712 aa).

Positions 1–23 (MAGAWLRWGLLLWAGLLAWSAHG) are cleaved as a signal peptide. The disordered stretch occupies residues 65-118 (TAASSRALAGPPAERTRRTSQPGGAALPGLRSPLPPEPARPGGPSRQLHSKAGA). Residues 181-213 (TKPSCVPPCQNGGMCLRPQLCVCKPGSKGKACE) enclose the EGF-like 1 domain. 3 disulfide bridges follow: C185-C195, C189-C201, and C203-C212. N-linked (GlcNAc...) asparagine glycosylation is found at N339 and N370. The 33-residue stretch at 391 to 423 (RVVICHLPCMNGGQCSSRDKCQCPPNFTGKLCQ) folds into the EGF-like 2 domain. Intrachain disulfides connect C395–C405, C399–C411, C413–C422, C551–C573, C560–C586, and C574–C589. The N-linked (GlcNAc...) asparagine glycan is linked to N416. Residues 549–601 (GRCFQETIGSQCGKALPGLSKQEDCCGTVGTSWGFNKCQKCPKKQSYHGYTQM) enclose the TB 1 domain. Residue N612 is glycosylated (N-linked (GlcNAc...) asparagine). Residues 618-658 (DINECQLQGVCPNGECLNTMGSYRCSCKMGFGPDPTFSSCV) form the EGF-like 3; calcium-binding domain. 7 disulfide bridges follow: C622/C633, C628/C642, C644/C657, C671/C694, C681/C706, C695/C709, and C696/C721. The O-linked (Glc) serine glycan is linked to S639. Residues 669–721 (GPCYRLVSPGRHCMHPLSVHLTKQICCCSVGKAWGPHCEKCPLPGTAAFKEIC) form the TB 2 domain. Positions 753 to 799 (NTQPVAKSTHPPPLPAKEEPVEALTSSWEHGPRGAEPEVVTAPPEKE) are disordered. T761 and T793 each carry an O-linked (GalNAc...) threonine glycan. The EGF-like 4; calcium-binding domain maps to 865 to 906 (EINECTVNPDICGAGHCINLPVRYTCICYEGYKFSEQLRKCV). 37 cysteine pairs are disulfide-bonded: C869–C881, C876–C890, C892–C905, C911–C923, C918–C932, C934–C947, C953–C964, C959–C973, C976–C988, C994–C1005, C1000–C1014, C1017–C1028, C1034–C1045, C1040–C1054, C1056–C1069, C1075–C1086, C1081–C1095, C1097–C1110, C1116–C1127, C1122–C1136, C1138–C1151, C1157–C1169, C1164–C1178, C1180–C1192, C1198–C1210, C1204–C1219, C1221–C1234, C1240–C1252, C1246–C1261, C1263–C1276, C1282–C1294, C1289–C1303, C1305–C1319, C1340–C1363, C1350–C1375, C1364–C1380, and C1365–C1392. The region spanning 907-948 (DIDECAQVRHLCSQGRCENTEGSFLCVCPAGFMASEEGTNCI) is the EGF-like 5; calcium-binding domain. O-linked (Glc) serine glycosylation occurs at S929. The EGF-like 6; calcium-binding domain occupies 949–989 (DVDECLRPDMCRDGRCINTAGAFRCEYCDSGYRMSRRGYCE). N966 carries the post-translational modification (3R)-3-hydroxyasparagine. In terms of domain architecture, EGF-like 7; calcium-binding spans 990–1029 (DIDECLKPSTCPEEQCVNTPGSYQCVPCTEGFRGWNGQCL). O-linked (Glc) serine glycosylation is present at S1011. The EGF-like 8; calcium-binding domain maps to 1030–1070 (DVDECLQPKVCTNGSCTNLEGSYMCSCHRGYSPTPDHRHCQ). N-linked (GlcNAc...) asparagine glycosylation occurs at N1042. The O-linked (Glc) serine glycan is linked to S1051. In terms of domain architecture, EGF-like 9; calcium-binding spans 1071-1111 (DIDECQQGNLCMNGQCRNTDGSFRCTCGQGYQLSAAKDQCE). In terms of domain architecture, EGF-like 10; calcium-binding spans 1112-1152 (DIDECEHHHLCSHGQCRNTEGSFQCVCNQGYRASVLGDHCE). Residue N1129 is modified to (3R)-3-hydroxyasparagine. A glycan (O-linked (Glc) serine) is linked at S1133. Positions 1153–1193 (DINECLEDSSVCQGGDCINTAGSYDCTCPDGFQLNDNKGCQ) constitute an EGF-like 11; calcium-binding domain. The 42-residue stretch at 1194 to 1235 (DINECAQPGLCGSHGECLNTQGSFHCVCEQGFSISADGRTCE) folds into the EGF-like 12; calcium-binding domain. S1216 carries an O-linked (Glc) serine glycan. The region spanning 1236 to 1277 (DIDECVNNTVCDSHGFCDNTAGSFRCLCYQGFQAPQDGQGCV) is the EGF-like 13; calcium-binding domain. N-linked (GlcNAc...) asparagine glycosylation is present at N1242. An EGF-like 14; calcium-binding domain is found at 1278-1320 (DVNECELLSGVCGEAFCENVEGSFLCVCADENQEYSPMTGQCR). An 8-Cys3 region region spans residues 1335-1402 (EEKKECYYNL…PRGKGLVPAG (68 aa)). The TB 3 domain maps to 1338 to 1392 (KECYYNLNDASLCDNVLAPNVTKQECCCTSGAGWGDNCEIFPCPVQGTAEFTEMC). N1357 carries N-linked (GlcNAc...) asparagine glycosylation. At S1405 the chain carries Phosphoserine. One can recognise an EGF-like 15; calcium-binding domain in the interval 1415–1457 (DADECLLFGEEICKNGYCLNTQPGYECYCKQGTYYDPVKLQCF). Cystine bridges form between C1419–C1432, C1427–C1441, C1443–C1456, C1462–C1473, C1468–C1482, C1484–C1497, C1517–C1541, C1527–C1553, C1542–C1556, and C1543–C1568. Residues 1458-1498 (DMDECQDPNSCIDGQCVNTEGSYNCFCTHPMVLDASEKRCV) enclose the EGF-like 16; calcium-binding domain. Residue S1479 is glycosylated (O-linked (Glc) serine). The segment at 1498-1712 (VQPTESNEQI…LNLDKESDLE (215 aa)) is C-terminal domain. In terms of domain architecture, TB 4 spans 1515–1568 (DLCWEHLSEEYVCSRPLVGKQTTYTECCCLYGEAWGMQCALCPMKDSDDYAQLC). S1588 and S1607 each carry phosphoserine. The 41-residue stretch at 1612-1652 (QAEECGILNGCENGRCVRVQEGYTCDCFDGYHLDMAKMTCV) folds into the EGF-like 17 domain. Intrachain disulfides connect C1616/C1627, C1622/C1636, C1638/C1651, C1657/C1672, C1667/C1681, and C1683/C1696. The region spanning 1653 to 1697 (DVNECSELNNRMSLCKNAKCINTEGSYKCLCLPGYIPSDKPNYCT) is the EGF-like 18; calcium-binding domain. O-linked (Glc) serine glycosylation occurs at S1678.

This sequence belongs to the LTBP family. In terms of assembly, interacts with TGFB1; associates via disulfide bonds with the Latency-associated peptide chain (LAP) regulatory chain of TGFB1, leading to regulate activation of TGF-beta-1. LTBP1 does not bind directly to TGF-beta-1, the active chain of TGFB1. Interacts (via C-terminal domain) with FBN1 (via N-terminal domain). Interacts with FBN2. Interacts with ADAMTSL2. Interacts with EFEMP2. Post-translationally, contains hydroxylated asparagine residues. In terms of processing, two intrachain disulfide bonds from the TB3 domain are rearranged upon TGFB1 binding, and form interchain bonds with TGFB1 propeptide, anchoring it to the extracellular matrix. O-glycosylated on serine residues by POGLUT2 and POGLUT3.

It is found in the secreted. The protein localises to the extracellular space. Its subcellular location is the extracellular matrix. Functionally, key regulator of transforming growth factor beta (TGFB1, TGFB2 and TGFB3) that controls TGF-beta activation by maintaining it in a latent state during storage in extracellular space. Associates specifically via disulfide bonds with the Latency-associated peptide (LAP), which is the regulatory chain of TGF-beta, and regulates integrin-dependent activation of TGF-beta. Outcompeted by LRRC32/GARP for binding to LAP regulatory chain of TGF-beta. The protein is Latent-transforming growth factor beta-binding protein 1 of Mus musculus (Mouse).